A 252-amino-acid chain; its full sequence is Type III pantothenate kinase (252 aa).

6–13 (DIGNTNIV) serves as a coordination point for ATP. Residue 107–110 (GADL) coordinates substrate. Aspartate 109 serves as the catalytic Proton acceptor. Residue aspartate 129 coordinates K(+). Threonine 132 is a binding site for ATP. Substrate is bound at residue threonine 184.

This sequence belongs to the type III pantothenate kinase family. As to quaternary structure, homodimer. It depends on NH4(+) as a cofactor. K(+) is required as a cofactor.

The protein localises to the cytoplasm. The catalysed reaction is (R)-pantothenate + ATP = (R)-4'-phosphopantothenate + ADP + H(+). The protein operates within cofactor biosynthesis; coenzyme A biosynthesis; CoA from (R)-pantothenate: step 1/5. Its function is as follows. Catalyzes the phosphorylation of pantothenate (Pan), the first step in CoA biosynthesis. The chain is Type III pantothenate kinase from Bifidobacterium animalis subsp. lactis (strain AD011).